The following is a 523-amino-acid chain: AarF domain-containing protein kinase 1 (523 aa).

A Protein kinase domain is found at 148-484; the sequence is EFEEKPLGAA…SLWSYIHISL (337 aa). ATP contacts are provided by residues 154 to 162 and K176; that span reads LGAASLAQV. Catalysis depends on D308, which acts as the Proton acceptor.

Belongs to the protein kinase superfamily. ADCK protein kinase family.

It localises to the mitochondrion. In terms of biological role, appears to be essential for maintaining mitochondrial cristae formation and mitochondrial function by acting via YME1L1 in a kinase-independent manner to regulate essential mitochondrial structural proteins OPA1 and IMMT. The action of this enzyme is not yet clear. It is not known if it has protein kinase activity and what type of substrate it would phosphorylate (Ser, Thr or Tyr). The polypeptide is AarF domain-containing protein kinase 1 (adck1) (Xenopus tropicalis (Western clawed frog)).